Here is a 103-residue protein sequence, read N- to C-terminus: MIVTTTPSVEGHQIATYHGIVTGEAILGANVIRDLFAGITDFIGGRSGAYEKELGRARETALSEMEQAARAKGANAVVGVDLDYEVINNMLMVSASGTAVTIA.

This sequence belongs to the UPF0145 family.

This chain is UPF0145 protein Rsph17025_2361, found in Cereibacter sphaeroides (strain ATCC 17025 / ATH 2.4.3) (Rhodobacter sphaeroides).